Reading from the N-terminus, the 187-residue chain is Translation machinery-associated protein 22 (187 aa).

One can recognise an SUI1 domain in the interval 94–165 (VTIKRIERNK…EIEEFILEKY (72 aa)).

Belongs to the DENR family. Interacts with the 40S ribosomal subunit.

Its subcellular location is the cytoplasm. The chain is Translation machinery-associated protein 22 (tma-22) from Neurospora crassa (strain ATCC 24698 / 74-OR23-1A / CBS 708.71 / DSM 1257 / FGSC 987).